A 326-amino-acid chain; its full sequence is uncharacterized protein (326 aa).

Catalysis depends on Tyr-53, which acts as the Proton donor. NADP(+) is bound at residue Ser-215 to Lys-225. Positions Ile-242 to Ile-305 form a coiled coil.

The protein belongs to the aldo/keto reductase family. Aldo/keto reductase 2 subfamily.

This is an uncharacterized protein from Bacillus subtilis (strain 168).